The primary structure comprises 939 residues: Phosphoenolpyruvate carboxylase (939 aa).

Catalysis depends on residues His-151 and Lys-593.

The protein belongs to the PEPCase type 1 family. It depends on Mg(2+) as a cofactor.

It carries out the reaction oxaloacetate + phosphate = phosphoenolpyruvate + hydrogencarbonate. Functionally, forms oxaloacetate, a four-carbon dicarboxylic acid source for the tricarboxylic acid cycle. The sequence is that of Phosphoenolpyruvate carboxylase from Gloeobacter violaceus (strain ATCC 29082 / PCC 7421).